Consider the following 385-residue polypeptide: uncharacterized protein (385 aa).

The next 9 helical transmembrane spans lie at 12-32 (GVAILGILLLNISAFGLPKAA), 50-70 (WAFLDLIGQVKFLTLFALLFG), 90-110 (LLVLLGFIHGLLFWDGDILLA), 132-152 (FNTGVMLYLVGLGVLLLLGLI), 195-215 (LALGAQYGWQLAGMMLIGAAL), 233-253 (TGFVLVAIGVTINLPAIALQW), 272-292 (LSAPFQAIGYASLFYGFWPQL), 312-332 (YLLQTLICTTLFYHLGLFMHF), and 335-355 (LELLAFVIPVWLANILFSVIW).

This sequence to B.subtilis YxaH and YrkO.

Its subcellular location is the cell membrane. Functionally, involved in transport. This is an uncharacterized protein from Escherichia coli (strain K12).